The primary structure comprises 221 residues: MALALAALAAVEPACGSRYQQLQNEEESGEPEQAAGDAPPPYSSISAESAAYFDYKDESGFPKPPSYNVATTLPSYDEAERTKAEATIPLVPGRDEDFVGRDDFDDADQLRIGNDGIFMLTFFMAFLFNWIGFFLSFCLTTSAAGRYGAISGFGLSLIKWILIVRFSTYFPGYFDGQYWLWWVFLVLGFLLFLRGFINYAKVRKMPETFSNLPRTRVLFIY.

Residue Ala-2 is modified to N-acetylalanine. The tract at residues 2–41 is interaction with UBE2L3; sequence ALALAALAAVEPACGSRYQQLQNEEESGEPEQAAGDAPPP. Topologically, residues 2–116 are cytoplasmic; the sequence is ALALAALAAV…ADQLRIGNDG (115 aa). The disordered stretch occupies residues 18–45; the sequence is RYQQLQNEEESGEPEQAAGDAPPPYSSI. Short sequence motifs (PPxY motif) lie at residues 39–42, 64–67, and 74–76; these read PPPY, PPSY, and PSY. An interaction with ITCH region spans residues 42–76; sequence YSSISAESAAYFDYKDESGFPKPPSYNVATTLPSY. A helical transmembrane segment spans residues 117–137; the sequence is IFMLTFFMAFLFNWIGFFLSF. The Extracellular portion of the chain corresponds to 138-143; the sequence is CLTTSA. The helical transmembrane segment at 144–164 threads the bilayer; that stretch reads AGRYGAISGFGLSLIKWILIV. Over 165 to 172 the chain is Cytoplasmic; it reads RFSTYFPG. The helical transmembrane segment at 173–193 threads the bilayer; sequence YFDGQYWLWWVFLVLGFLLFL. Over 194-221 the chain is Extracellular; sequence RGFINYAKVRKMPETFSNLPRTRVLFIY.

As to quaternary structure, forms heterodimers with NDFIP2. Interacts with several E3 ubiquitin-protein ligases, including ITCH, NEDD4, NEDD4L and WWP2. The interaction with NEDD4, NEDD4L and ITCH leads to relocalization of these proteins to exosomes and eventually to exosomal secretion. Interacts with U2SURP. Interacts with SLC11A2/DMT1. Interacts with PTEN. May interact with phosphorylated EGFR. Interacts with BRAT1. Interacts with KCNH2. Interacts with MAVS. Part of a complex containing ITCH, NDFIP1 and MAP3K7. Interacts (via N-terminus) with UBE2L3; the interaction mediates recruitment of UBE2L3 to ITCH. Ubiquitinated by NEDD4 and ITCH; mono-, di- and polyubiquitinated forms are detected. Ubiquitination regulates its degradation. In terms of processing, undergoes transient tyrosine phosphorylation following EGF stimulation, most probably by catalyzed by SRC. Phosphorylation SRC is enhanced in the presence of NDFIP2 which may act as a scaffold to recruit SRC to NDFIP1. As to expression, widely expressed. Higher levels are detected in cerebellum, pituitary, thalamus, kidney, liver, testis, salivary glands and placenta. Also expressed in fetal brain, kidney and lung.

Its subcellular location is the endosome membrane. The protein resides in the golgi apparatus membrane. It localises to the synapse. The protein localises to the synaptosome. It is found in the cell projection. Its subcellular location is the dendrite. The protein resides in the secreted. Activates HECT domain-containing E3 ubiquitin-protein ligases, including NEDD4 and ITCH, and consequently modulates the stability of their targets. As a result, controls many cellular processes. Prevents chronic T-helper cell-mediated inflammation by activating ITCH and thus controlling JUNB degradation. Promotes pancreatic beta cell death through degradation of JUNB and inhibition of the unfolded protein response, leading to reduction of insulin secretion. Restricts the production of pro-inflammatory cytokines in effector Th17 T-cells by promoting ITCH-mediated ubiquitination and degradation of RORC. Together with NDFIP2, limits the cytokine signaling and expansion of effector Th2 T-cells by promoting degradation of JAK1, probably by ITCH- and NEDD4L-mediated ubiquitination. Regulates peripheral T-cell tolerance to self and foreign antigens, forcing the exit of naive CD4+ T-cells from the cell cycle before they become effector T-cells. Negatively regulates RLR-mediated antiviral response by promoting SMURF1-mediated ubiquitination and subsequent degradation of MAVS. Negatively regulates KCNH2 potassium channel activity by decreasing its cell-surface expression and interfering with channel maturation through recruitment of NEDD4L to the Golgi apparatus where it mediates KCNH2 degradation. In cortical neurons, mediates the ubiquitination of the divalent metal transporter SLC11A2/DMT1 by NEDD4L, leading to its down-regulation and protection of the cells from cobalt and iron toxicity. Important for normal development of dendrites and dendritic spines in cortex. Enhances the ubiquitination of BRAT1 mediated by: NEDD4, NEDD4L and ITCH and is required for the nuclear localization of ubiquitinated BRAT1. Enhances the ITCH-mediated ubiquitination of MAP3K7 by recruiting E2 ubiquitin-conjugating enzyme UBE2L3 to ITCH. Modulates EGFR signaling through multiple pathways. In particular, may regulate the ratio of AKT1-to-MAPK8 signaling in response to EGF, acting on AKT1 probably through PTEN destabilization and on MAPK8 through ITCH-dependent MAP2K4 inactivation. As a result, may control cell growth rate. Inhibits cell proliferation by promoting PTEN nuclear localization and changing its signaling specificity. This is NEDD4 family-interacting protein 1 (NDFIP1) from Homo sapiens (Human).